A 337-amino-acid polypeptide reads, in one-letter code: MIQHAIAKLLEGEDLSRAEAAQVMTEIADGGATPAQSGAFLAALRMKGETVEEIAGAADVMRQRADRVRVSRDVFIDTCGTGGDGRHTFNISTTAAFVAAGAGVCVAKHGNRAVSSRSGSADVLAALGVNVDADKETVERCIEEVGIGFLFAVRLHPAFKAIAGVRRELGVRTIFNLLGPLANPAGARHQVLGVYEARWVPVLGGVLAALGAAHAFVVHGEGLDEIAVTGMTHVCEVKDGAVERYTIRPEDLGLPRRDAAELAGGDAAANARIVTHVLEGQQGGPRDAVLANAAAALVCAGAATDLRDGVARAARSIDSGAAREKLRQLVAATTVPA.

5-phospho-alpha-D-ribose 1-diphosphate contacts are provided by residues Gly-80, 83–84 (GD), Thr-88, 90–93 (NIST), 108–116 (KHGNRAVSS), and Ser-120. Anthranilate is bound at residue Gly-80. Ser-92 is a binding site for Mg(2+). Asn-111 contacts anthranilate. Position 166 (Arg-166) interacts with anthranilate. Mg(2+) is bound by residues Asp-224 and Glu-225.

Belongs to the anthranilate phosphoribosyltransferase family. In terms of assembly, homodimer. The cofactor is Mg(2+).

The catalysed reaction is N-(5-phospho-beta-D-ribosyl)anthranilate + diphosphate = 5-phospho-alpha-D-ribose 1-diphosphate + anthranilate. It participates in amino-acid biosynthesis; L-tryptophan biosynthesis; L-tryptophan from chorismate: step 2/5. Catalyzes the transfer of the phosphoribosyl group of 5-phosphorylribose-1-pyrophosphate (PRPP) to anthranilate to yield N-(5'-phosphoribosyl)-anthranilate (PRA). This is Anthranilate phosphoribosyltransferase from Anaeromyxobacter dehalogenans (strain 2CP-C).